The sequence spans 139 residues: Actin-depolymerizing factor 4 (139 aa).

The 135-residue stretch at 5 to 139 (SSGVAIHDDC…SLDALKDRVK (135 aa)) folds into the ADF-H domain.

The protein belongs to the actin-binding proteins ADF family. As to quaternary structure, interacts with LECRK1 (via kinase domain).

The protein resides in the cytoplasm. The protein localises to the cytoskeleton. In terms of biological role, actin-depolymerizing protein. Severs actin filaments (F-actin) and binds to actin monomers. Involved in innate immunity. Required for the expression of defense-related genes PR1A, LOX2 and CHS1 upon biotic stresses. Required for basal resistance to the fungal blast (Magnaporthe grisea), bacterial blight (Xanthomonas oryzae pv. oryzae, Xoo) and the herbivorous insect brown planthopper (Nilaparvata lugens, BPH). Involved in the promotion of seed germination. Required for the expression of alpha-amylase genes during seed germination. The polypeptide is Actin-depolymerizing factor 4 (ADF4) (Oryza sativa subsp. japonica (Rice)).